Reading from the N-terminus, the 216-residue chain is MSKAGKKVKAQQHGHLADHVSVGETQIPKASTQHLLRKAGSLSAAGDTEVPIRGFVHMKLHKLVQKSLLAMQLAKRKTIMKSDVKKAAELMHLPVFAIPTKDSGAKGSVFLSCRQKGAGSAGTGSETNSQEVRSQMKSTCLIIPKERFRTMAKEISKKEGHDVHIAEAALDMLQVIVESCTVRLLEKALVITYSGKRTRVTSKDIETAFMLEHGPL.

The span at 1–12 (MSKAGKKVKAQQ) shows a compositional bias: basic residues. The disordered stretch occupies residues 1-23 (MSKAGKKVKAQQHGHLADHVSVG).

It localises to the host nucleus. The protein resides in the host cytoplasm. It is found in the virion. Its function is as follows. Histone-like protein that is recruited to viral factories during viral replication and participates in viral DNA packaging and virion production probably by forming unstable nucleosome-like particles. May compact the viral DNA. This is Histone doublet H4-H3 from Melbournevirus (MelV).